A 453-amino-acid chain; its full sequence is UDP-glycosyltransferase 79B6 (453 aa).

UDP-alpha-D-glucose-binding positions include serine 266, 325 to 327, 342 to 350, and 364 to 367; these read VQQ, HCGFGSMWE, and LGEQ.

Belongs to the UDP-glycosyltransferase family.

The chain is UDP-glycosyltransferase 79B6 (UGT79B6) from Arabidopsis thaliana (Mouse-ear cress).